Consider the following 129-residue polypeptide: Small ribosomal subunit protein uS11 (129 aa).

Belongs to the universal ribosomal protein uS11 family. Part of the 30S ribosomal subunit. Interacts with proteins S7 and S18. Binds to IF-3.

Located on the platform of the 30S subunit, it bridges several disparate RNA helices of the 16S rRNA. Forms part of the Shine-Dalgarno cleft in the 70S ribosome. This is Small ribosomal subunit protein uS11 from Pseudomonas fluorescens (strain ATCC BAA-477 / NRRL B-23932 / Pf-5).